The sequence spans 868 residues: Translation initiation factor IF-2 (868 aa).

Composition is skewed to basic and acidic residues over residues 156 to 166 (ETVKEEEKINS) and 199 to 209 (SKKEEVKPEKV). 2 disordered regions span residues 156-177 (ETVK…QDEL) and 199-269 (SKKE…KYRE). Residues 249 to 260 (RGGRSKFKKKKG) show a composition bias toward basic residues. The tr-type G domain maps to 368–537 (GRAPVVTIMG…LLQSEVLELK (170 aa)). The interval 377 to 384 (GHVDHGKT) is G1. Residue 377–384 (GHVDHGKT) participates in GTP binding. A G2 region spans residues 402 to 406 (GITQH). The segment at 423-426 (DTPG) is G3. Residues 423-427 (DTPGH) and 477-480 (NKMD) each bind GTP. Residues 477-480 (NKMD) are G4. The G5 stretch occupies residues 513-515 (SAK).

Belongs to the TRAFAC class translation factor GTPase superfamily. Classic translation factor GTPase family. IF-2 subfamily.

It is found in the cytoplasm. Functionally, one of the essential components for the initiation of protein synthesis. Protects formylmethionyl-tRNA from spontaneous hydrolysis and promotes its binding to the 30S ribosomal subunits. Also involved in the hydrolysis of GTP during the formation of the 70S ribosomal complex. The protein is Translation initiation factor IF-2 of Legionella pneumophila subsp. pneumophila (strain Philadelphia 1 / ATCC 33152 / DSM 7513).